A 127-amino-acid chain; its full sequence is Small ribosomal subunit protein eS8 (127 aa).

It belongs to the eukaryotic ribosomal protein eS8 family. In terms of assembly, part of the 30S ribosomal subunit.

The polypeptide is Small ribosomal subunit protein eS8 (Nanoarchaeum equitans (strain Kin4-M)).